An 82-amino-acid polypeptide reads, in one-letter code: DNA-directed RNA polymerase subunit Rpo5 (82 aa).

The protein belongs to the archaeal Rpo5/eukaryotic RPB5 RNA polymerase subunit family. In terms of assembly, part of the RNA polymerase complex.

It is found in the cytoplasm. The enzyme catalyses RNA(n) + a ribonucleoside 5'-triphosphate = RNA(n+1) + diphosphate. DNA-dependent RNA polymerase (RNAP) catalyzes the transcription of DNA into RNA using the four ribonucleoside triphosphates as substrates. This is DNA-directed RNA polymerase subunit Rpo5 from Thermococcus kodakarensis (strain ATCC BAA-918 / JCM 12380 / KOD1) (Pyrococcus kodakaraensis (strain KOD1)).